Reading from the N-terminus, the 514-residue chain is Maltose/maltodextrin transport system permease protein MalF (514 aa).

Over 1-16 the chain is Cytoplasmic; that stretch reads MDVIKKKHWWQSDALK. A helical membrane pass occupies residues 17–36; sequence WSVLGLLGLLVGYLVVLMYA. Over 37–39 the chain is Periplasmic; sequence QGE. A helical transmembrane segment spans residues 40–58; that stretch reads YLFAITTLILSSAGLYIFA. Residues 59-66 are Cytoplasmic-facing; the sequence is NRKAYAWR. A helical membrane pass occupies residues 67 to 92; the sequence is YVYPGMAGMGLFVLFPLVCTIAIAFT. Residues 93-275 lie on the Periplasmic side of the membrane; it reads NYSSTNQLTF…RVFTDEGIQK (183 aa). A helical membrane pass occupies residues 276-306; it reads PFLAIFVWTVVFSLITVFLTVAVGMVLACLV. Residues 281-505 form the ABC transmembrane type-1 domain; the sequence is FVWTVVFSLI…LLVGALAIVN (225 aa). The Cytoplasmic segment spans residues 307–318; that stretch reads QWEALRGKAVYR. The helical transmembrane segment at 319-336 threads the bilayer; sequence VLLILPYAVPSFISILIF. Residues 337–369 lie on the Periplasmic side of the membrane; sequence KGLFNQSFGEINMMLSALFGVKPAWFSDPTTAR. Residues 370–392 form a helical membrane-spanning segment; sequence TMLIIVNTWLGYPYMMILCMGLL. The Cytoplasmic portion of the chain corresponds to 393 to 425; it reads KAIPDDLYEASAMDGAGPFQNFFKITLPLLIKP. Residues 426–452 form a helical membrane-spanning segment; the sequence is LTPLMIASFAFNFNNFVLIQLLTNGGP. Residues 453–483 lie on the Periplasmic side of the membrane; that stretch reads DRLGTTTPAGYTDLLVNYTYRIAFEGGGGQD. A helical membrane pass occupies residues 484 to 505; sequence FGLAAAIATLIFLLVGALAIVN. The Cytoplasmic segment spans residues 506-514; sequence LKATRMKFD.

Belongs to the binding-protein-dependent transport system permease family. MalFG subfamily. The complex is composed of two ATP-binding proteins (MalK), two transmembrane proteins (MalG and MalF) and a solute-binding protein (MalE). Protein stability and stable complex formation require YidC.

The protein resides in the cell inner membrane. Functionally, part of the ABC transporter complex MalEFGK involved in maltose/maltodextrin import. Probably responsible for the translocation of the substrate across the membrane. This chain is Maltose/maltodextrin transport system permease protein MalF, found in Escherichia coli (strain K12).